Here is an 87-residue protein sequence, read N- to C-terminus: Small ribosomal subunit protein uS17 (87 aa).

It belongs to the universal ribosomal protein uS17 family. In terms of assembly, part of the 30S ribosomal subunit.

In terms of biological role, one of the primary rRNA binding proteins, it binds specifically to the 5'-end of 16S ribosomal RNA. In Bacillus cereus (strain ATCC 14579 / DSM 31 / CCUG 7414 / JCM 2152 / NBRC 15305 / NCIMB 9373 / NCTC 2599 / NRRL B-3711), this protein is Small ribosomal subunit protein uS17.